We begin with the raw amino-acid sequence, 90 residues long: uncharacterized protein (90 aa).

The signal sequence occupies residues 1–21 (MFKFSIPLLLFIFLFFSCINS). Residues 56 to 90 (SNEKLPERILSGSSGSCSSCSISSSNGSSSRSSKQ) are disordered. Low complexity predominate over residues 66 to 90 (SGSSGSCSSCSISSSNGSSSRSSKQ). N-linked (GlcNAc...) asparagine glycosylation is present at Asn-81.

This is an uncharacterized protein from Dictyostelium discoideum (Social amoeba).